Reading from the N-terminus, the 426-residue chain is Glutamate-1-semialdehyde 2,1-aminomutase (426 aa).

K265 carries the N6-(pyridoxal phosphate)lysine modification.

It belongs to the class-III pyridoxal-phosphate-dependent aminotransferase family. HemL subfamily. In terms of assembly, homodimer. Pyridoxal 5'-phosphate is required as a cofactor.

It is found in the cytoplasm. It catalyses the reaction (S)-4-amino-5-oxopentanoate = 5-aminolevulinate. It participates in porphyrin-containing compound metabolism; protoporphyrin-IX biosynthesis; 5-aminolevulinate from L-glutamyl-tRNA(Glu): step 2/2. This is Glutamate-1-semialdehyde 2,1-aminomutase from Neisseria gonorrhoeae (strain NCCP11945).